A 140-amino-acid polypeptide reads, in one-letter code: Large-conductance mechanosensitive channel (140 aa).

The next 2 membrane-spanning stretches (helical) occupy residues 14–34 (VMDLAVGVIIGGAFATITGSL) and 85–105 (GAFVTAVINFLILAFIIFLLV).

This sequence belongs to the MscL family. As to quaternary structure, homopentamer.

The protein localises to the cell inner membrane. Channel that opens in response to stretch forces in the membrane lipid bilayer. May participate in the regulation of osmotic pressure changes within the cell. This chain is Large-conductance mechanosensitive channel, found in Sphingopyxis alaskensis (strain DSM 13593 / LMG 18877 / RB2256) (Sphingomonas alaskensis).